The sequence spans 231 residues: Phosphatidylserine decarboxylase proenzyme (231 aa).

Ser-200 acts as the Schiff-base intermediate with substrate; via pyruvic acid in catalysis. Pyruvic acid (Ser); by autocatalysis is present on Ser-200.

The protein belongs to the phosphatidylserine decarboxylase family. PSD-A subfamily. In terms of assembly, heterodimer of a large membrane-associated beta subunit and a small pyruvoyl-containing alpha subunit. Pyruvate is required as a cofactor. Post-translationally, is synthesized initially as an inactive proenzyme. Formation of the active enzyme involves a self-maturation process in which the active site pyruvoyl group is generated from an internal serine residue via an autocatalytic post-translational modification. Two non-identical subunits are generated from the proenzyme in this reaction, and the pyruvate is formed at the N-terminus of the alpha chain, which is derived from the carboxyl end of the proenzyme. The post-translation cleavage follows an unusual pathway, termed non-hydrolytic serinolysis, in which the side chain hydroxyl group of the serine supplies its oxygen atom to form the C-terminus of the beta chain, while the remainder of the serine residue undergoes an oxidative deamination to produce ammonia and the pyruvoyl prosthetic group on the alpha chain.

It localises to the cell membrane. The enzyme catalyses a 1,2-diacyl-sn-glycero-3-phospho-L-serine + H(+) = a 1,2-diacyl-sn-glycero-3-phosphoethanolamine + CO2. It functions in the pathway phospholipid metabolism; phosphatidylethanolamine biosynthesis; phosphatidylethanolamine from CDP-diacylglycerol: step 2/2. Catalyzes the formation of phosphatidylethanolamine (PtdEtn) from phosphatidylserine (PtdSer). This is Phosphatidylserine decarboxylase proenzyme from Mycobacterium tuberculosis (strain ATCC 25177 / H37Ra).